We begin with the raw amino-acid sequence, 412 residues long: Gamma-glutamyl phosphate reductase (412 aa).

This sequence belongs to the gamma-glutamyl phosphate reductase family.

Its subcellular location is the cytoplasm. It catalyses the reaction L-glutamate 5-semialdehyde + phosphate + NADP(+) = L-glutamyl 5-phosphate + NADPH + H(+). Its pathway is amino-acid biosynthesis; L-proline biosynthesis; L-glutamate 5-semialdehyde from L-glutamate: step 2/2. Its function is as follows. Catalyzes the NADPH-dependent reduction of L-glutamate 5-phosphate into L-glutamate 5-semialdehyde and phosphate. The product spontaneously undergoes cyclization to form 1-pyrroline-5-carboxylate. This Actinobacillus pleuropneumoniae serotype 5b (strain L20) protein is Gamma-glutamyl phosphate reductase.